The primary structure comprises 104 residues: Salivary protein FS145 (104 aa).

The signal sequence occupies residues 1-18 (MKLFAVFLLFCLVNQIYC). 4 disulfide bridges follow: Cys-32–Cys-80, Cys-62–Cys-89, Cys-72–Cys-100, and Cys-76–Cys-102. Positions 92–94 (WGD) match the Putative integrin attachment site; atypical (WGD) motif.

In terms of assembly, interacts with host integrin alpha-V/beta-3 (ITGAV:ITGB3).

Its subcellular location is the secreted. Functionally, inhibits proliferation, adhesion and migration of host cells as well as host angiogenesis by blocking host integrin alpha-V/beta-3 (ITGAV:ITGB3). This chain is Salivary protein FS145, found in Xenopsylla cheopis (Oriental rat flea).